Here is a 388-residue protein sequence, read N- to C-terminus: LL-diaminopimelate aminotransferase (388 aa).

Substrate-binding residues include Tyr13, Gly38, Lys102, Tyr126, and Asn176. Residues 101–102 (SK), Tyr126, Asn176, Tyr207, and 235–237 (SLS) contribute to the pyridoxal 5'-phosphate site. Position 238 is an N6-(pyridoxal phosphate)lysine (Lys238). A pyridoxal 5'-phosphate-binding site is contributed by Arg246. Residue Arg364 coordinates substrate.

Belongs to the class-I pyridoxal-phosphate-dependent aminotransferase family. LL-diaminopimelate aminotransferase subfamily. As to quaternary structure, homodimer. Requires pyridoxal 5'-phosphate as cofactor.

It catalyses the reaction (2S,6S)-2,6-diaminopimelate + 2-oxoglutarate = (S)-2,3,4,5-tetrahydrodipicolinate + L-glutamate + H2O + H(+). Its pathway is amino-acid biosynthesis; L-lysine biosynthesis via DAP pathway; LL-2,6-diaminopimelate from (S)-tetrahydrodipicolinate (aminotransferase route): step 1/1. Involved in the synthesis of meso-diaminopimelate (m-DAP or DL-DAP), required for both lysine and peptidoglycan biosynthesis. Catalyzes the direct conversion of tetrahydrodipicolinate to LL-diaminopimelate. The chain is LL-diaminopimelate aminotransferase from Dehalococcoides mccartyi (strain ATCC BAA-2100 / JCM 16839 / KCTC 5957 / BAV1).